Reading from the N-terminus, the 307-residue chain is Elongation factor Ts (307 aa).

Positions 79–82 (TDFV) are involved in Mg(2+) ion dislocation from EF-Tu.

It belongs to the EF-Ts family.

The protein resides in the cytoplasm. Its function is as follows. Associates with the EF-Tu.GDP complex and induces the exchange of GDP to GTP. It remains bound to the aminoacyl-tRNA.EF-Tu.GTP complex up to the GTP hydrolysis stage on the ribosome. This Sinorhizobium medicae (strain WSM419) (Ensifer medicae) protein is Elongation factor Ts.